Reading from the N-terminus, the 506-residue chain is UDP-N-acetylmuramoyl-L-alanyl-D-glutamate--2,6-diaminopimelate ligase (506 aa).

Ser-38 provides a ligand contact to UDP-N-acetyl-alpha-D-muramoyl-L-alanyl-D-glutamate. Position 124 to 130 (Gly-124 to Ser-130) interacts with ATP. UDP-N-acetyl-alpha-D-muramoyl-L-alanyl-D-glutamate-binding positions include Thr-166–Thr-167, Ser-193, and Arg-201. The residue at position 233 (Lys-233) is an N6-carboxylysine. Residues Arg-401, Asp-425 to Arg-428, Gly-477, and Glu-481 contribute to the meso-2,6-diaminopimelate site. Positions Asp-425–Arg-428 match the Meso-diaminopimelate recognition motif motif.

This sequence belongs to the MurCDEF family. MurE subfamily. Requires Mg(2+) as cofactor. Carboxylation is probably crucial for Mg(2+) binding and, consequently, for the gamma-phosphate positioning of ATP.

It is found in the cytoplasm. The catalysed reaction is UDP-N-acetyl-alpha-D-muramoyl-L-alanyl-D-glutamate + meso-2,6-diaminopimelate + ATP = UDP-N-acetyl-alpha-D-muramoyl-L-alanyl-gamma-D-glutamyl-meso-2,6-diaminopimelate + ADP + phosphate + H(+). Its pathway is cell wall biogenesis; peptidoglycan biosynthesis. Functionally, catalyzes the addition of meso-diaminopimelic acid to the nucleotide precursor UDP-N-acetylmuramoyl-L-alanyl-D-glutamate (UMAG) in the biosynthesis of bacterial cell-wall peptidoglycan. In Leptospira interrogans serogroup Icterohaemorrhagiae serovar copenhageni (strain Fiocruz L1-130), this protein is UDP-N-acetylmuramoyl-L-alanyl-D-glutamate--2,6-diaminopimelate ligase.